Reading from the N-terminus, the 555-residue chain is Urocanate hydratase (555 aa).

Residues 52-53 (GG), glutamine 130, 176-178 (GMG), glutamate 196, arginine 201, 242-243 (NA), 263-267 (QTSAH), 272-273 (YL), and tyrosine 321 each bind NAD(+). Cysteine 409 is a catalytic residue. Glycine 491 contacts NAD(+).

The protein belongs to the urocanase family. The cofactor is NAD(+).

It localises to the cytoplasm. It catalyses the reaction 4-imidazolone-5-propanoate = trans-urocanate + H2O. Its pathway is amino-acid degradation; L-histidine degradation into L-glutamate; N-formimidoyl-L-glutamate from L-histidine: step 2/3. Functionally, catalyzes the conversion of urocanate to 4-imidazolone-5-propionate. The polypeptide is Urocanate hydratase (Nocardioides sp. (strain ATCC BAA-499 / JS614)).